Reading from the N-terminus, the 238-residue chain is Probable phosphatase phospho2 (238 aa).

Asp-8 functions as the Nucleophile in the catalytic mechanism. Mg(2+) is bound by residues Asp-8 and Asp-10. Asp-10 (proton donor) is an active-site residue. Substrate-binding residues include Asp-19 and Asp-99. Asp-179 lines the Mg(2+) pocket.

The protein belongs to the HAD-like hydrolase superfamily. PHOSPHO family. Mg(2+) serves as cofactor.

Probable phosphatase. This chain is Probable phosphatase phospho2 (phospho2), found in Xenopus tropicalis (Western clawed frog).